A 345-amino-acid chain; its full sequence is N-acetyl-gamma-glutamyl-phosphate reductase (345 aa).

The active site involves Cys-149.

It belongs to the NAGSA dehydrogenase family. Type 1 subfamily.

The protein resides in the cytoplasm. It catalyses the reaction N-acetyl-L-glutamate 5-semialdehyde + phosphate + NADP(+) = N-acetyl-L-glutamyl 5-phosphate + NADPH + H(+). Its pathway is amino-acid biosynthesis; L-arginine biosynthesis; N(2)-acetyl-L-ornithine from L-glutamate: step 3/4. In terms of biological role, catalyzes the NADPH-dependent reduction of N-acetyl-5-glutamyl phosphate to yield N-acetyl-L-glutamate 5-semialdehyde. This chain is N-acetyl-gamma-glutamyl-phosphate reductase, found in Halalkalibacterium halodurans (strain ATCC BAA-125 / DSM 18197 / FERM 7344 / JCM 9153 / C-125) (Bacillus halodurans).